The following is a 245-amino-acid chain: Chlorophyll a-b binding protein 1B-21, chloroplastic (245 aa).

A chloroplast-targeting transit peptide spans 1–44; sequence MASSSGLRSCSAVGVPSLLAPSSRSGRSGLPFCAYATTSGRVTM. Tryptophan 48 contacts chlorophyll b. Phenylalanine 68, glutamate 87, and histidine 90 together coordinate chlorophyll a. Arginine 92 lines the chlorophyll b pocket. Residues 93–113 traverse the membrane as a helical segment; that stretch reads WAMLCVPGVLVPEALGLGNWV. Leucine 129 lines the chlorophyll a pocket. The chain crosses the membrane as a helical span at residues 132 to 152; that stretch reads PVPWGNLPTILAIEFLAIAFA. Residues valine 133, glutamate 153, and arginine 156 each coordinate chlorophyll b. Chlorophyll a contacts are provided by lysine 190, glutamate 191, asparagine 194, arginine 196, glutamine 208, and histidine 224.

It belongs to the light-harvesting chlorophyll a/b-binding (LHC) protein family. The LHC complex consists of chlorophyll a-b binding proteins. The cofactor is Binds at least 14 chlorophylls (8 Chl-a and 6 Chl-b) and carotenoids such as lutein and neoxanthin.. In terms of processing, photoregulated by reversible phosphorylation of its threonine residues.

The protein resides in the plastid. The protein localises to the chloroplast thylakoid membrane. Its function is as follows. The light-harvesting complex (LHC) functions as a light receptor, it captures and delivers excitation energy to photosystems with which it is closely associated. This Hordeum vulgare (Barley) protein is Chlorophyll a-b binding protein 1B-21, chloroplastic (LHC Ib-21).